Reading from the N-terminus, the 1403-residue chain is Protein FAM135B (1403 aa).

Disordered stretches follow at residues 445–483 (EKNLINQNSSSRKDIPLSTTEAPQLGSDEDVTRRPEVQE), 514–548 (EDECWTGPRPDAVKDSLTDTDICSRSPGPDEGQTP), 648–669 (REALDTKPSQPDHAEEPEDLSA), and 718–740 (RHAHHRNSLEGGHTESNTSLPSG). Residues 649–661 (EALDTKPSQPDHA) are compositionally biased toward basic and acidic residues. The span at 731–740 (TESNTSLPSG) shows a compositional bias: polar residues. Phosphoserine occurs at positions 775 and 776. A disordered region spans residues 790–819 (TAGFSEDLDPSSKENSPPRHTSLSYGGSRV). Residues 802–814 (KENSPPRHTSLSY) show a composition bias toward polar residues.

The protein belongs to the FAM135 family.

In Mus musculus (Mouse), this protein is Protein FAM135B (Fam135b).